A 282-amino-acid polypeptide reads, in one-letter code: Bis(5'-nucleosyl)-tetraphosphatase, symmetrical (282 aa).

It belongs to the Ap4A hydrolase family.

It carries out the reaction P(1),P(4)-bis(5'-adenosyl) tetraphosphate + H2O = 2 ADP + 2 H(+). In terms of biological role, hydrolyzes diadenosine 5',5'''-P1,P4-tetraphosphate to yield ADP. This Burkholderia pseudomallei (strain 1106a) protein is Bis(5'-nucleosyl)-tetraphosphatase, symmetrical.